The sequence spans 254 residues: 3-deoxy-manno-octulosonate cytidylyltransferase (254 aa).

The protein belongs to the KdsB family.

It localises to the cytoplasm. The catalysed reaction is 3-deoxy-alpha-D-manno-oct-2-ulosonate + CTP = CMP-3-deoxy-beta-D-manno-octulosonate + diphosphate. It functions in the pathway nucleotide-sugar biosynthesis; CMP-3-deoxy-D-manno-octulosonate biosynthesis; CMP-3-deoxy-D-manno-octulosonate from 3-deoxy-D-manno-octulosonate and CTP: step 1/1. Its pathway is bacterial outer membrane biogenesis; lipopolysaccharide biosynthesis. Functionally, activates KDO (a required 8-carbon sugar) for incorporation into bacterial lipopolysaccharide in Gram-negative bacteria. The protein is 3-deoxy-manno-octulosonate cytidylyltransferase of Pseudomonas aeruginosa (strain ATCC 15692 / DSM 22644 / CIP 104116 / JCM 14847 / LMG 12228 / 1C / PRS 101 / PAO1).